Consider the following 923-residue polypeptide: Helicase POLQ-like (923 aa).

Residues 1 to 84 (MNRTPIRRCK…STVTPIQQKI (84 aa)) are disordered. Residues 43–55 (STSPQSPSSSTEN) show a composition bias toward low complexity. Residues 178 to 349 (DKRLLDGENC…ALRAFVYSTN (172 aa)) enclose the Helicase ATP-binding domain. Residue 191–198 (LPTGAGKT) coordinates ATP. A DEAH box motif is present at residues 295–298 (DELH). The 205-residue stretch at 392-596 (GICQLLAKLI…CVVLKLAENI (205 aa)) folds into the Helicase C-terminal domain.

Belongs to the helicase family. SKI2 subfamily.

The protein resides in the nucleus. It is found in the chromosome. It carries out the reaction Couples ATP hydrolysis with the unwinding of duplex DNA by translocating in the 3'-5' direction.. The enzyme catalyses ATP + H2O = ADP + phosphate + H(+). Its function is as follows. Single-stranded 3'-5' DNA helicase that plays a key role in homology-driven double-strand break (DSB) repair. Involved in different DSB repair mechanisms that are guided by annealing of extensive stretches of complementary bases at break ends, such as microhomology-mediated end-joining (MMEJ), single-strand annealing (SSA) or synthesis-dependent strand annealing (SDSA). This Caenorhabditis elegans protein is Helicase POLQ-like.